The following is a 464-amino-acid chain: Argininosuccinate lyase (464 aa).

The protein belongs to the lyase 1 family. Argininosuccinate lyase subfamily.

The protein resides in the cytoplasm. It carries out the reaction 2-(N(omega)-L-arginino)succinate = fumarate + L-arginine. It participates in amino-acid biosynthesis; L-arginine biosynthesis; L-arginine from L-ornithine and carbamoyl phosphate: step 3/3. The chain is Argininosuccinate lyase from Pseudomonas putida (strain GB-1).